Here is a 158-residue protein sequence, read N- to C-terminus: RNA pyrophosphohydrolase (158 aa).

The Nudix hydrolase domain maps to 6 to 149 (GYRLNVGIVL…KRHVYRKVMK (144 aa)). The Nudix box signature appears at 38–59 (GGINIGETPEQAMYRELFEEIG).

It belongs to the Nudix hydrolase family. RppH subfamily. Requires a divalent metal cation as cofactor.

Its function is as follows. Accelerates the degradation of transcripts by removing pyrophosphate from the 5'-end of triphosphorylated RNA, leading to a more labile monophosphorylated state that can stimulate subsequent ribonuclease cleavage. The polypeptide is RNA pyrophosphohydrolase (Blochmanniella floridana).